The following is a 77-amino-acid chain: MKEQKLIHEGLITESLPNGMFWVRLDNEDLVLGYISGRIRRSSIRILPGDRVKIEVSRYDSTRGRIIYRLRNKDSNE.

The S1-like domain maps to 1-71 (MKEQKLIHEG…TRGRIIYRLR (71 aa)).

This sequence belongs to the IF-1 family. As to quaternary structure, component of the 30S ribosomal translation pre-initiation complex which assembles on the 30S ribosome in the order IF-2 and IF-3, IF-1 and N-formylmethionyl-tRNA(fMet); mRNA recruitment can occur at any time during PIC assembly.

Its subcellular location is the plastid. The protein resides in the chloroplast. In terms of biological role, one of the essential components for the initiation of protein synthesis. Stabilizes the binding of IF-2 and IF-3 on the 30S subunit to which N-formylmethionyl-tRNA(fMet) subsequently binds. Helps modulate mRNA selection, yielding the 30S pre-initiation complex (PIC). Upon addition of the 50S ribosomal subunit IF-1, IF-2 and IF-3 are released leaving the mature 70S translation initiation complex. The polypeptide is Translation initiation factor IF-1, chloroplastic (Acorus calamus var. americanus (American sweet flag)).